The sequence spans 817 residues: Tax1-binding protein 1 homolog (817 aa).

Phosphoserine occurs at positions 124 and 138. Positions 144–628 form a coiled coil; the sequence is TTKAGLLELK…ENQAERKLEG (485 aa). The segment at 320–420 is oligomerization; that stretch reads EEISRLQFSL…ELKLSAVNKD (101 aa). Residues 609–627 show a composition bias toward basic and acidic residues; the sequence is SREKEHKRSVENQAERKLE. Residues 609 to 685 form a disordered region; sequence SREKEHKRSV…ADGAFYPDEI (77 aa). Serine 617 carries the post-translational modification Phosphoserine; by IKKA. The span at 628 to 643 shows a compositional bias: polar residues; sequence GQNSQSPHQISQCLKT. Residue serine 633 is modified to Phosphoserine. Residue serine 694 is modified to Phosphoserine; by IKKA. Positions 704–742 are disordered; sequence SQPARNLSRPDGLEDPEDSKEDEKVPTAPDPPSQHLRGH. UBZ1-type zinc fingers lie at residues 755-781 and 782-808; these read QKKCPLCELMFPPNYDQSKFEEHVESH and WKVCPMCSEQFPPDYDQQVFERHVQTH. Cysteine 758, cysteine 761, histidine 777, histidine 781, cysteine 785, cysteine 788, histidine 804, and histidine 808 together coordinate Zn(2+).

As to quaternary structure, homooligomer. Interacts with TNFAIP3. Interacts with STARD13. Interacts with MYO6. Interacts with TOM1; the interaction is indirect and is mediated by MYO6, which acts as a bridge between TOM1 and TAX1BP1. Interacts with MAVS; this interaction induces MAVS polyubiquitination. Interacts with TNIP1. Interacts with TRAF6; this interaction mediates deubiquitination of TRAF6 and inhibition of NF-kappa-B activation. Interacts with RIPK1; this interaction negatively regulates RIPK1 ubiquitination. Interacts with NBR1. Interacts with TBK1. Interacts with RB1CC1. Interacts with SQSTM1. Interacts with AZI2. Post-translationally, phosphorylated in the C-terminal region by CHUK/IKKA leading to NF-kappa-B signaling down-regulation.

It is found in the cytoplasm. The protein resides in the mitochondrion. The protein localises to the preautophagosomal structure. It localises to the cytoplasmic vesicle. Its subcellular location is the autophagosome. In terms of biological role, ubiquitin-binding adapter that participates in inflammatory, antiviral and innate immune processes as well as selective autophagy regulation. Plays a key role in the negative regulation of NF-kappa-B and IRF3 signalings by acting as an adapter for the ubiquitin-editing enzyme A20/TNFAIP3 to bind and inactivate its substrates. Disrupts the interactions between the E3 ubiquitin ligase TRAF3 and TBK1/IKBKE to attenuate 'Lys63'-linked polyubiquitination of TBK1 and thereby IFN-beta production. Also recruits A20/TNFAIP3 to ubiquitinated signaling proteins TRAF6 and RIPK1, leading to their deubiquitination and disruption of IL-1 and TNF-induced NF-kappa-B signaling pathways. Inhibits virus-induced apoptosis by inducing the 'Lys-48'-linked polyubiquitination and degradation of MAVS via recruitment of the E3 ligase ITCH, thereby attenuating MAVS-mediated apoptosis signaling. As a macroautophagy/autophagy receptor, facilitates the xenophagic clearance of pathogenic bacteria such as Salmonella typhimurium and Mycobacterium tuberculosis. Upon NBR1 recruitment to the SQSTM1-ubiquitin condensates, acts as the major recruiter of RB1CC1 to these ubiquitin condensates to promote their autophagic degradation. The sequence is that of Tax1-binding protein 1 homolog (TAX1BP1) from Bos taurus (Bovine).